We begin with the raw amino-acid sequence, 652 residues long: DNA mismatch repair protein MutL (652 aa).

2 disordered regions span residues 357 to 377 (LGAN…NYPS) and 425 to 457 (PDKG…NSTD). The span at 365–375 (SHSSNTPTLNY) shows a compositional bias: polar residues.

It belongs to the DNA mismatch repair MutL/HexB family.

Its function is as follows. This protein is involved in the repair of mismatches in DNA. It is required for dam-dependent methyl-directed DNA mismatch repair. May act as a 'molecular matchmaker', a protein that promotes the formation of a stable complex between two or more DNA-binding proteins in an ATP-dependent manner without itself being part of a final effector complex. This chain is DNA mismatch repair protein MutL, found in Colwellia psychrerythraea (strain 34H / ATCC BAA-681) (Vibrio psychroerythus).